Reading from the N-terminus, the 106-residue chain is Large ribosomal subunit protein uL24 (106 aa).

Belongs to the universal ribosomal protein uL24 family. As to quaternary structure, part of the 50S ribosomal subunit.

One of two assembly initiator proteins, it binds directly to the 5'-end of the 23S rRNA, where it nucleates assembly of the 50S subunit. In terms of biological role, one of the proteins that surrounds the polypeptide exit tunnel on the outside of the subunit. This chain is Large ribosomal subunit protein uL24, found in Acinetobacter baylyi (strain ATCC 33305 / BD413 / ADP1).